The primary structure comprises 180 residues: MDQRRNNSKPIKNQDPINAFIRAREVLIIGDNGEKLGPLKRNEAIQLAEEKGLDLMQVGQQPDGLAICKILDYGKFRYQQQKKNKEAKKNQVKVENKEIRLTVNIGQHDLVTKAKKAREFLEAGDRVKISLKFKGREIAYMDLGKETLDRFYKEIEDIAKIEKEAKLTSRFLDMYVVPKK.

This sequence belongs to the IF-3 family. In terms of assembly, monomer.

The protein resides in the cytoplasm. Functionally, IF-3 binds to the 30S ribosomal subunit and shifts the equilibrium between 70S ribosomes and their 50S and 30S subunits in favor of the free subunits, thus enhancing the availability of 30S subunits on which protein synthesis initiation begins. This chain is Translation initiation factor IF-3, found in Mesoplasma florum (strain ATCC 33453 / NBRC 100688 / NCTC 11704 / L1) (Acholeplasma florum).